The primary structure comprises 349 residues: Probable FBD-associated F-box protein At5g38565 (349 aa).

The region spanning 1 to 47 (MDIFNGLPDDVLVKILSFVPTKVAVSTSILSKRWEFLWMWLPRLDFG) is the F-box domain. Residues 263-311 (CWNQPISVPECLLESLQIFNLSHYFGKQQDLDFVVYILKNACHLKTATI) form the FBD domain.

The protein is Probable FBD-associated F-box protein At5g38565 of Arabidopsis thaliana (Mouse-ear cress).